The chain runs to 415 residues: Citrate (Re)-synthase (415 aa).

A Pyruvate carboxyltransferase domain is found at 4-275 (IFIIDVTNRD…GHEVDLSKAW (272 aa)).

It belongs to the alpha-IPM synthase/homocitrate synthase family. Mn(2+) serves as cofactor.

The enzyme catalyses oxaloacetate + acetyl-CoA + H2O = citrate + CoA + H(+). Inhibited by citrate and under aerobic conditions. Its function is as follows. Catalyzes the condensation of the acetyl group of acetyl coenzyme A (acetyl-CoA) with oxaloacetate to form citrate. This enzyme is highly Re-face stereospecific with respect to the C-2 of oxaloacetate. This is Citrate (Re)-synthase from Dehalococcoides mccartyi (strain CBDB1).